The primary structure comprises 229 residues: Translation initiation factor IF-3 (229 aa).

Disordered stretches follow at residues 1 to 21 and 184 to 229; these read MAIQ…TNRR and QAQR…AGPR. Over residues 192–203 the composition is skewed to low complexity; the sequence is AAAQAAPAAAPQ. Positions 204-221 are enriched in pro residues; sequence PGAPAAPPAAPAPAPAPE.

This sequence belongs to the IF-3 family. In terms of assembly, monomer.

It localises to the cytoplasm. Its function is as follows. IF-3 binds to the 30S ribosomal subunit and shifts the equilibrium between 70S ribosomes and their 50S and 30S subunits in favor of the free subunits, thus enhancing the availability of 30S subunits on which protein synthesis initiation begins. This Anaeromyxobacter sp. (strain Fw109-5) protein is Translation initiation factor IF-3.